The sequence spans 469 residues: DNA (cytosine-5-)-methyltransferase M.ApeKI (469 aa).

The 466-residue stretch at 4–469 (YSTISLFSGA…EALAEVLDAV (466 aa)) folds into the SAM-dependent MTase C5-type domain. Residue Cys-93 is part of the active site.

Belongs to the class I-like SAM-binding methyltransferase superfamily. C5-methyltransferase family.

The enzyme catalyses a 2'-deoxycytidine in DNA + S-adenosyl-L-methionine = a 5-methyl-2'-deoxycytidine in DNA + S-adenosyl-L-homocysteine + H(+). Functionally, cytosine methylase that recognizes the double-stranded sequence 5'-GC(A/T)GC-3', methylates C-5 position of the second cytosine on both strands, and protects the DNA from cleavage by the ApeKI endonuclease. The sequence is that of DNA (cytosine-5-)-methyltransferase M.ApeKI from Aeropyrum pernix (strain ATCC 700893 / DSM 11879 / JCM 9820 / NBRC 100138 / K1).